The following is a 360-amino-acid chain: MRTLLLTILIFFFTVNPISAKFYTNVSSIPPLQFLNATQNAWETFSKLAGCHIGENINGLSKLKQYFRRFGYITTTGNCTDDFDDVLQSAINTYQKNFNLKVTGKLDSSTLRQIVKPRCGNPDLIDGVSEMNGGKILRTTEKYSFFPGKPRWPKRKRDLTYAFAPQNNLTDEVKRVFSRAFTRWAEVTPLNFTRSESILRADIVIGFFSGEHGDGEPFDGAMGTLAHASSPPTGMLHLDGDEDWLISNGEISRRILPVTTVVDLESVAVHEIGHLLGLGHSSVEDAIMFPAISGGDRKVELAKDDIEGIQHLYGGNPNGDGGGSKPSRESQSTGGDSVRRWRGWMISLSSIATCIFLISV.

The signal sequence occupies residues 1 to 20 (MRTLLLTILIFFFTVNPISA). A propeptide spans 21–142 (KFYTNVSSIP…GGKILRTTEK (122 aa)) (activation peptide). N-linked (GlcNAc...) asparagine glycans are attached at residues asparagine 25, asparagine 36, and asparagine 78. Residues 117 to 124 (PRCGNPDL) carry the Cysteine switch motif. Position 119 (cysteine 119) interacts with Zn(2+). Residues asparagine 168 and asparagine 191 are each glycosylated (N-linked (GlcNAc...) asparagine). Histidine 270 provides a ligand contact to Zn(2+). The active site involves glutamate 271. Residues histidine 274 and histidine 280 each contribute to the Zn(2+) site. The interval 312–336 (LYGGNPNGDGGGSKPSRESQSTGGD) is disordered. Residue serine 337 is the site of GPI-anchor amidated serine attachment. Positions 338 to 360 (VRRWRGWMISLSSIATCIFLISV) are cleaved as a propeptide — removed in mature form.

It belongs to the peptidase M10A family. Matrix metalloproteinases (MMPs) subfamily. Zn(2+) serves as cofactor. Mostly expressed in leaves, roots and stems, and, to a lower extent, in flowers.

Its subcellular location is the cell membrane. Its activity is regulated as follows. Repressed by acetohydroxamic acid (AHA). Matrix metalloproteinases (MMPs) or matrixins may play a role in the degradation and remodeling of the extracellular matrix (ECM) during development or in response to stresses. Active on Mca-KESAbuNLFVLKDpaR-NH(2) (QF75) and, to some extent, on McaPLGLDpaAR-NH(2) (QF24), myelin basic protein (MBP) and beta-casein. The protein is Metalloendoproteinase 5-MMP of Arabidopsis thaliana (Mouse-ear cress).